The primary structure comprises 550 residues: Phosphatidylinositol 4-kinase gamma 2 (550 aa).

2 consecutive Ubiquitin-like domains span residues 34–111 (SVLV…YDPL) and 112–190 (LVTV…VEDT). A disordered region spans residues 228-247 (VDGLNKGSPPVRSAEGTGGT). Positions 234–532 (GSPPVRSAEG…SVLPASSEAT (299 aa)) constitute a PI3K/PI4K catalytic domain. Positions 240–246 (SAEGTGG) are G-loop. Residues 241–247 (AEGTGGT), K263, and 359–362 (QMFM) contribute to the ATP site. The catalytic loop stretch occupies residues 392-400 (ANADRHAGN). The segment at 415 to 441 (PIDHGYCLPENFEDCTFEWLYWPQAKL) is activation loop. D417 serves as a coordination point for ATP.

It belongs to the PI3/PI4-kinase family. Type II PI4K subfamily.

The protein localises to the membrane. It carries out the reaction a 1,2-diacyl-sn-glycero-3-phospho-(1D-myo-inositol) + ATP = a 1,2-diacyl-sn-glycero-3-phospho-(1D-myo-inositol 4-phosphate) + ADP + H(+). The phosphorylation of phosphatidylinositol (PI) to PI4P is the first committed step in the generation of phosphatidylinositol 4,5-bisphosphate (PIP2), a precursor of the second messenger inositol 1,4,5-trisphosphate (InsP3). The protein is Phosphatidylinositol 4-kinase gamma 2 (PI4KG2) of Arabidopsis thaliana (Mouse-ear cress).